A 273-amino-acid polypeptide reads, in one-letter code: Putative phosphoenolpyruvate synthase regulatory protein (273 aa).

153-160 provides a ligand contact to ADP; that stretch reads GVSRSGKT.

Belongs to the pyruvate, phosphate/water dikinase regulatory protein family. PSRP subfamily.

The catalysed reaction is [pyruvate, water dikinase] + ADP = [pyruvate, water dikinase]-phosphate + AMP + H(+). It catalyses the reaction [pyruvate, water dikinase]-phosphate + phosphate + H(+) = [pyruvate, water dikinase] + diphosphate. Functionally, bifunctional serine/threonine kinase and phosphorylase involved in the regulation of the phosphoenolpyruvate synthase (PEPS) by catalyzing its phosphorylation/dephosphorylation. This Verminephrobacter eiseniae (strain EF01-2) protein is Putative phosphoenolpyruvate synthase regulatory protein.